Consider the following 371-residue polypeptide: Aminomethyltransferase (371 aa).

The protein belongs to the GcvT family. As to quaternary structure, the glycine cleavage system is composed of four proteins: P, T, L and H.

It catalyses the reaction N(6)-[(R)-S(8)-aminomethyldihydrolipoyl]-L-lysyl-[protein] + (6S)-5,6,7,8-tetrahydrofolate = N(6)-[(R)-dihydrolipoyl]-L-lysyl-[protein] + (6R)-5,10-methylene-5,6,7,8-tetrahydrofolate + NH4(+). Its function is as follows. The glycine cleavage system catalyzes the degradation of glycine. The polypeptide is Aminomethyltransferase (Pectobacterium atrosepticum (strain SCRI 1043 / ATCC BAA-672) (Erwinia carotovora subsp. atroseptica)).